The following is a 536-amino-acid chain: Glyco-Gag protein (536 aa).

Over 1-54 (MSGASSGTATGARLFGISSVLGEYRVLIGDEGAGPSRSPSEVSFSVWYRSRAAR) the chain is Cytoplasmic. A helical transmembrane segment spans residues 55–75 (LVILCLVASFLVPCLTFLIAE). The Extracellular portion of the chain corresponds to 76 to 536 (TVMGQTVTTP…TQNRNKDREE (461 aa)). N-linked (GlcNAc...) asparagine; by host glycosylation is present at N137. Disordered regions lie at residues 174 to 284 (VRPF…NNRP) and 494 to 536 (ETPE…DREE). The span at 177–198 (FLPPPKPPTPLPQPLSPQPSAP) shows a compositional bias: pro residues. Over residues 199-209 (PTSSLYPVLPK) the composition is skewed to low complexity. Composition is skewed to pro residues over residues 210-223 (TNPP…PDPS) and 233-246 (EPPP…PPPS). The segment covering 494-511 (ETPEEREERLWQRQEERD) has biased composition (basic and acidic residues).

Post-translationally, glycosylated by host. In terms of processing, cleaved by host near the middle of the molecule, releasing the c-terminal half containing capsid and nucleoprotein domains op GAG.

The protein resides in the host cell membrane. Functionally, plays a role in viral particle release. Presumably acts by facilitating the fission of the virion bud at the cell surface. The chain is Glyco-Gag protein from Feline sarcoma virus (strain McDonough).